A 589-amino-acid chain; its full sequence is Poly(3-hydroxyalkanoate) polymerase subunit PhaC (589 aa).

A disordered region spans residues 1-23 (MATGKGAAASTQEGKSQPFKVTP). Residue C319 is part of the active site.

Belongs to the PHA/PHB synthase family. Type I PhaC subfamily. As to quaternary structure, monomer.

Its subcellular location is the cytoplasm. The catalysed reaction is (3R)-3-hydroxybutanoyl-CoA + [(3R)-hydroxybutanoate](n) = [(3R)-hydroxybutanoate](n+1) + CoA. It participates in biopolymer metabolism; poly-(R)-3-hydroxybutanoate biosynthesis. Its function is as follows. Polymerizes (R)-3-hydroxybutyryl-CoA to create polyhydroxybutyrate (PHB) which consists of thousands of hydroxybutyrate molecules linked end to end. PHB serves as an intracellular energy reserve material when cells grow under conditions of nutrient limitation. This Cupriavidus necator (strain ATCC 17699 / DSM 428 / KCTC 22496 / NCIMB 10442 / H16 / Stanier 337) (Ralstonia eutropha) protein is Poly(3-hydroxyalkanoate) polymerase subunit PhaC.